The following is a 98-amino-acid chain: MKYVALAFVLSLVILQISAQVGAAYIPGMGLGSVGRTGAVAGASAGVGNQGRGAGILRLLSIIMELVKNNQQAQPKQDTFGAQLQSLLKKKMILEMIN.

The first 23 residues, 1–23, serve as a signal peptide directing secretion; sequence MKYVALAFVLSLVILQISAQVGA.

In terms of tissue distribution, nacreous layer of shell (at protein level). Expressed primarily in the mantle with highest level in the mantle pallium and lower level in the mantle edge.

Its subcellular location is the secreted. This is an uncharacterized protein from Pinctada maxima (Silver-lipped pearl oyster).